We begin with the raw amino-acid sequence, 518 residues long: Coiled-coil domain-containing protein 82 (518 aa).

Residues 1–14 (MVHVRRHETRKNSK) show a composition bias toward basic residues. Residues 1–266 (MVHVRRHETR…EDDYRYDEDG (266 aa)) are disordered. Over residues 16-27 (QKPEQKSRVDWH) the composition is skewed to basic and acidic residues. The span at 38-67 (DSDEELDSNEELDSDEEHDSGESIDSDEEL) shows a compositional bias: acidic residues. A compositionally biased stretch (basic and acidic residues) spans 68 to 89 (DISKKSDINELPEKETELKLIK). Residues 92 to 107 (SQGSNSKHLTNTSNSS) are compositionally biased toward polar residues. Residues 111 to 127 (EQLKETKHNDLPDDEAH) are compositionally biased toward basic and acidic residues. Ser170 and Ser194 each carry phosphoserine. Acidic residues predominate over residues 191–201 (DECSSLEMEQE). Thr202 is subject to Phosphothreonine. Residues 204–232 (EKSSAARKREYHQKLQELSERSRQRRRRN) adopt a coiled-coil conformation. Residues 215–225 (HQKLQELSERS) show a composition bias toward basic and acidic residues. Residues 249–266 (GEEDEDEDEDDYRYDEDG) are compositionally biased toward acidic residues. A Phosphoserine modification is found at Ser305.

The chain is Coiled-coil domain-containing protein 82 (Ccdc82) from Mus musculus (Mouse).